Consider the following 439-residue polypeptide: Xylose isomerase (439 aa).

Residues H101 and D104 contribute to the active site. Positions 232, 268, 271, 296, 307, 309, and 339 each coordinate Mg(2+).

This sequence belongs to the xylose isomerase family. In terms of assembly, homotetramer. Mg(2+) serves as cofactor.

It localises to the cytoplasm. The catalysed reaction is alpha-D-xylose = alpha-D-xylulofuranose. The polypeptide is Xylose isomerase (xylA) (Thermoanaerobacterium thermosaccharolyticum (strain ATCC 7956 / DSM 571 / NCIMB 9385 / NCA 3814 / NCTC 13789 / WDCM 00135 / 2032) (Clostridium thermosaccharolyticum)).